Here is a 584-residue protein sequence, read N- to C-terminus: Delta 8-(E)-sphingolipid desaturase (584 aa).

Residues 7–82 form the Cytochrome b5 heme-binding domain; sequence KKIFTRSQII…FTRFKIGEIE (76 aa). Heme-binding residues include H42 and H65. Residues 109–134 are disordered; that stretch reads NKNTSNKKTLDSKLDNDSSNSTSDLE. The helical transmembrane segment at 261-281 threads the bilayer; that stretch reads LFLYSLSFLKINQLFLSAVFM. A Histidine box-1 motif is present at residues 293-297; that stretch reads HDAGH. Residues 306–326 form a helical membrane-spanning segment; sequence IDNIFGMLIADWFGGLSLGWW. The Histidine box-2 signature appears at 330–334; sequence HNVHH. 3 helical membrane passes run 386 to 403, 423 to 443, and 455 to 475; these read YLYYPILCFGRFNLYRLS, YFEFFGLSFFFYWFFYLLVFK, and VMVSHITTMLVHVQITLSHFA. The Histidine box-3 signature appears at 514-518; that stretch reads QAIHH.

The protein belongs to the fatty acid desaturase type 1 family.

Its subcellular location is the membrane. The enzyme catalyses an N-acylsphing-4-enine + 2 Fe(II)-[cytochrome b5] + O2 + 2 H(+) = a (4E,8E)-4-sphinga-4,8-dienine ceramide + 2 Fe(III)-[cytochrome b5] + 2 H2O. It participates in lipid metabolism; sphingolipid metabolism. Delta(8)-fatty-acid desaturase which introduces a double bond at the 8-position in the long-chain base (LCB) of ceramides. Required for the formation of the di-unsaturated sphingoid base (E,E)-sphinga-4,8-dienine during glucosylceramide (GluCer) biosynthesis. This is Delta 8-(E)-sphingolipid desaturase from Candida albicans (strain SC5314 / ATCC MYA-2876) (Yeast).